Consider the following 120-residue polypeptide: U13-lycotoxin-Ls1f (120 aa).

An N-terminal signal peptide occupies residues 1–19 (MKILFVLISILYAVYRFSS). Positions 20-54 (EEDVDSAYLANELEPVEDINSEQYAALEPKEEQER) are excised as a propeptide. Cystine bridges form between C56/C70, C63/C76, C69/C87, and C78/C85. The Agouti domain maps to 56 to 95 (CAGMGQDCKDDCDCCLNIATCNCWFGRYFCSCTFGDYQTC).

This sequence belongs to the neurotoxin 05 (agouti) family. Post-translationally, contains 6 disulfide bonds. Expressed by the venom gland.

Its subcellular location is the secreted. The chain is U13-lycotoxin-Ls1f from Lycosa singoriensis (Wolf spider).